We begin with the raw amino-acid sequence, 727 residues long: Catalase-peroxidase (727 aa).

Residues 1 to 26 are disordered; the sequence is MSDEKKCPVTGRTSSQVAGSGTSNKD. Positions 11–26 are enriched in polar residues; that stretch reads GRTSSQVAGSGTSNKD. Residues 96–219 constitute a cross-link (tryptophyl-tyrosyl-methioninium (Trp-Tyr) (with M-245)); sequence WHSAGTYRIG…LAAVQMGLIY (124 aa). Histidine 97 serves as the catalytic Proton acceptor. The tryptophyl-tyrosyl-methioninium (Tyr-Met) (with W-96) cross-link spans 219-245; it reads YVNPEGPNGDPNAVASGKDVRETFARM. Histidine 260 contributes to the heme b binding site. Over residues 346–362 the composition is skewed to basic and acidic residues; it reads SDPEAKKAVPDAHDPSK. Positions 346–365 are disordered; that stretch reads SDPEAKKAVPDAHDPSKTHP.

The protein belongs to the peroxidase family. Peroxidase/catalase subfamily. Homodimer or homotetramer. Heme b serves as cofactor. Formation of the three residue Trp-Tyr-Met cross-link is important for the catalase, but not the peroxidase activity of the enzyme.

The enzyme catalyses H2O2 + AH2 = A + 2 H2O. The catalysed reaction is 2 H2O2 = O2 + 2 H2O. Functionally, bifunctional enzyme with both catalase and broad-spectrum peroxidase activity. This Maridesulfovibrio salexigens (strain ATCC 14822 / DSM 2638 / NCIMB 8403 / VKM B-1763) (Desulfovibrio salexigens) protein is Catalase-peroxidase.